Consider the following 859-residue polypeptide: Alanine--tRNA ligase (859 aa).

4 residues coordinate Zn(2+): His-562, His-566, Cys-664, and His-668.

This sequence belongs to the class-II aminoacyl-tRNA synthetase family. The cofactor is Zn(2+).

Its subcellular location is the cytoplasm. It catalyses the reaction tRNA(Ala) + L-alanine + ATP = L-alanyl-tRNA(Ala) + AMP + diphosphate. Functionally, catalyzes the attachment of alanine to tRNA(Ala) in a two-step reaction: alanine is first activated by ATP to form Ala-AMP and then transferred to the acceptor end of tRNA(Ala). Also edits incorrectly charged Ser-tRNA(Ala) and Gly-tRNA(Ala) via its editing domain. This Aliivibrio fischeri (strain ATCC 700601 / ES114) (Vibrio fischeri) protein is Alanine--tRNA ligase.